Here is a 2935-residue protein sequence, read N- to C-terminus: MASHNVMNLARDVKSAAVRDREKAVDELSHLLNPRNRSTNLSDLGDKSYHEIFEAIFSFVLREKPVLSDRKKSQATLNSTATRLSKCAEAVRMTVGRGNSKIGRKTLLAIVDHITQVLPGPNGDDFVTPLLQDYIKALTEVLSRPAHVEILARKGGQHWETCVGFFLDVAQYLLPDEADISTLSLARASPALTRSSPAPGSGYSRSGGRSTPSTQSQRRAAPGEGGLLKDVLEGLHYIVIGGNAPILRQYKDITLVVLRVLSLKQLSLGSLQTLAFAIINTVFTTTNADDLAHASSVVQSILPLMSYWWRCEKVSQDEVIRALRIEISRSIFLMHLHIENLVINSSDEKIRSDLEELTENIWSEYSRRSEAFRLQMSDITFALSSLPTYGLQLNMFGLRAHNVYGEGHWAVIQNLAFLEGIMLLPQSRTPADDAEQSEQRRKRRRIEQDMSRIRLKLKTVEVGVRGTALQLIPFLLADNSLSRDELVDLLPELALLATDKNPVTASWALIASASCISKPEVCHDQIDVWRQLWHFATRSVSLPGTSRAASVLLHAILEADVLPYHTISQDINNMVTTADVNGPSVLCDTSISLMFHVLQLRNARVPSASQSTCHHIIRWVFLRWNPNESTFASYHSMHAQPIQLVNLIRACCGTTALELNSHQAAPGGPLTETWSSFKQTEKFTRYVLLAKDEFHDADPIGCCDLSEQSDPASLVDANSRYASRKLTLELFYPKLSELSDLCTSWNKKPNEGGIQISFDRFQSLLSACLAGTLLLPIFGDLNSTQSSSVDSTLKYILDKALNSALTSVEPTAFVDSVLRVVRAVMPDMITSSLNRIQANNPDLFHLFGRIWKSIGQQKDQTDPDNNIDLMDIDEDFDSQSSRASSVHAPVAAPRFNIQMKLDMQTFYIETKARLRFLSILDSDFGQIGLVPDTYVDHLIKMPDEDLLMCQSLLLELFGSDLVITPENALSIIERLGDCISLSEYQCAEVALSTCIGVIDGLHSIWLNDKQHLSERVGDLYYHFIKVCLTSNIFSPGVQMSMVQLLFTLLRTNTEYGKDQGLDSPRTCLLYILKNGPMSVKYTISQKIADIFDLFVLKLHDEVFVDVLDSLPTDPLDTTGIAFRLLVLSNLACRWSTLLRRCTYHIFETPGKIPRSTDYATRCLVNVSRTLNLESPKALFRLFSRQLLYTWLEYDHIEDIPFSIFGFKTLGDLLKSAQSEAIGLTVMRGQDQTFAEVCHLLGSSESDLVRENFTTAVAYSMIFGDSNGGDDKERGEAHVKRLLGRAAYMELIYINFVDIAALFFDLIDQENSFERVFARFKLDYAGQILSAVKAISHSPAELPANQQPMFKAKYLINELHRLCQNTEFQFHDLWTPPVVVSIARKLLNTVHPALGPLHACSVLRKVRVLISLGGSVALESYPLEMLLNATRTFITDSECADDALGISQYLLAEGARHLSNVPSFLAGYALSTLASLRVFLESSQSSTTQESQFKATMSKAEKFHVWISKYLEEYESPMFKNLEQRSAFKSITRSAARIRSSGNAERGTAESKLLLDILADQAADHQLLNEPSRQLALGLLCGDFSIPETIKDDVIESDEDALKYSTAVWKSCDTENLSEEYLSWAGRVVGRAFSASGEIPTGVLRESNLSQYQKMAPGSNGSETGILYLLQDLTSNPDSITAGLAEAALRSIVSDANNLDDELLAVACQKSLTESLLVTSQWGTHRSPPSDKGLITPTSSPNQLDVWSTDITSKDWLLNLSAHLARYVPESIVLSVLAPILARVEHFAERAFPFVVHLALFFTRNQQHSPKRQLSVAIKSWLECTVTEAKENQKLLINMLLYLRTQQYPKESSIADRSHWLEVDSALVAAAASRCGMYKTSLLFVEYVPPETSRSSRTSSAATKEVDMSETLLAIFENIDDPDAYYGLPEEPSLSKILARVEYENDGPMSLAFRGAEYDSNVHLGNPMAQSDGQALVRAFSTLGLSGPSNWFLQTQDNMETSPPVLEDTFNTARKLGIWNLPAPPSDHHAVTVFKAYQSIHQATDIANVRAAVHDGFGRTMSSLVVHSLNATALRKRLGALASLTELDDVLGVSDSSEMNLLIEKFKNRSGWMRSGLYESVGQILSCRSTTMSMVSQQETLRTNIKLSAATARQMEVESMITASQIYRYHQATQESLKISTILTKLIPSCTALDLHVDAAVTIEAANSAWDYGQMSTSIRMLQDIDKDSVLEKQTLPVSRSDLLSKIGYQVSVARLEKPHDIQKNYLEPALKELKGKGQGRQAGSVFHQFAMFCDQQLQDPDGLEDLARLQSLKKAKSDEVSELKTLISGTRDTQLKTRYSHVLNKEKQWLNLDEQELRRVEQTRSEFVRLSLENYLLSLIASDEHNNDALRFTALWLERSEEESTNQAVMRHLSEVPTRKFAGLTNQLTSRLQDNNTTFQKLLLELVYKICVDHPYHGMYQIWSGTKAKAQQKDDVAVLRVRATDRVAKSLAETQSVANIWLSIDKTSKYYHALAMDRNPNKYKSGVKIPLRDSTPGHNLVNCLAKYRIPSPTMHIELSATKDYSKVPIISKLEPTMTIASGVSAPKIITAVGSDGVRYKQLVKGGHDDLRQDAIMEQVFSAVSSLLKLHRITQQRNLSIRTYKVLPLTASSGLIEFVPNTIPLHEFLMPAHERYYPKDLKGSQCRKEIFGVQGRAVATRISTYRRMTEKFHPVMRYFFMENFMDPDEWFLKRLAYTRSTAAISMLGHVLGLGDRHGHNILLDHKTGEVVHIDLGVAFEAGRILPVPEMVPFRLTRDIVDGMGITKTEGVFRRCCEFTLDALREEQYSIMTILDVLRFDPLYTWSISPLRLAKLQKARHNDDSPMDDEQSEAETKKGKKAAGHVNEPSEADRALEVVRKKLSKTLSVTATVNDLINQATDERNLAVLYSGWAAYA.

A disordered region spans residues 191 to 222; that stretch reads ALTRSSPAPGSGYSRSGGRSTPSTQSQRRAAP. Low complexity predominate over residues 194–217; that stretch reads RSSPAPGSGYSRSGGRSTPSTQSQ. One can recognise an FAT domain in the interval 1866–2468; it reads LVAAAASRCG…MYQIWSGTKA (603 aa). Positions 2573–2884 constitute a PI3K/PI4K catalytic domain; sequence LEPTMTIASG…KKGKKAAGHV (312 aa). The G-loop stretch occupies residues 2579–2585; that stretch reads IASGVSA. The segment at 2751 to 2759 is catalytic loop; that stretch reads GLGDRHGHN. Positions 2771–2795 are activation loop; the sequence is HIDLGVAFEAGRILPVPEMVPFRLT. Residues 2857–2889 form a disordered region; it reads ARHNDDSPMDDEQSEAETKKGKKAAGHVNEPSE. The FATC domain occupies 2903–2935; that stretch reads KTLSVTATVNDLINQATDERNLAVLYSGWAAYA.

Belongs to the PI3/PI4-kinase family. ATM subfamily. Associates with DNA double-strand breaks.

The protein resides in the nucleus. It localises to the chromosome. Its subcellular location is the telomere. It catalyses the reaction L-seryl-[protein] + ATP = O-phospho-L-seryl-[protein] + ADP + H(+). The enzyme catalyses L-threonyl-[protein] + ATP = O-phospho-L-threonyl-[protein] + ADP + H(+). In terms of biological role, serine/threonine protein kinase which activates checkpoint signaling upon genotoxic stresses such as ionizing radiation (IR), ultraviolet light (UV), or DNA replication stalling, thereby acting as a DNA damage sensor. Recognizes the substrate consensus sequence [ST]-Q. Phosphorylates histone H2A to form H2AS128ph (gamma-H2A) at sites of DNA damage, involved in the regulation of DNA damage response mechanism. Required for the control of telomere length and genome stability. This Gibberella zeae (strain ATCC MYA-4620 / CBS 123657 / FGSC 9075 / NRRL 31084 / PH-1) (Wheat head blight fungus) protein is Serine/threonine-protein kinase TEL1 (TEL1).